The primary structure comprises 79 residues: Conotoxin Tr6.3 (79 aa).

The N-terminal stretch at 1 to 22 (MKLTCVLIISVLFLTASQLITA) is a signal peptide. Positions 23–47 (VYSRDKQQYRAARLRDEMRNLKGAR) are excised as a propeptide. Disulfide bonds link Cys-49/Cys-62, Cys-56/Cys-67, and Cys-61/Cys-77. 2 positions are modified to 4-hydroxyproline: Pro-60 and Pro-63.

The protein belongs to the conotoxin O1 superfamily. As to expression, expressed by the venom duct.

It is found in the secreted. Functionally, ion channel inhibitor that inhibits the increase in intracellular calcium upon depolarization in DRG neurons. In vivo, both intraperitoneal and intracranial injections into mice induce hyperactivity. The sequence is that of Conotoxin Tr6.3 from Conus terebra (Sea snail).